Reading from the N-terminus, the 455-residue chain is Probable glycine dehydrogenase (decarboxylating) subunit 1 (455 aa).

This sequence belongs to the GcvP family. N-terminal subunit subfamily. In terms of assembly, the glycine cleavage system is composed of four proteins: P, T, L and H. In this organism, the P 'protein' is a heterodimer of two subunits.

It catalyses the reaction N(6)-[(R)-lipoyl]-L-lysyl-[glycine-cleavage complex H protein] + glycine + H(+) = N(6)-[(R)-S(8)-aminomethyldihydrolipoyl]-L-lysyl-[glycine-cleavage complex H protein] + CO2. Its function is as follows. The glycine cleavage system catalyzes the degradation of glycine. The P protein binds the alpha-amino group of glycine through its pyridoxal phosphate cofactor; CO(2) is released and the remaining methylamine moiety is then transferred to the lipoamide cofactor of the H protein. This Saccharolobus solfataricus (strain ATCC 35092 / DSM 1617 / JCM 11322 / P2) (Sulfolobus solfataricus) protein is Probable glycine dehydrogenase (decarboxylating) subunit 1.